Consider the following 187-residue polypeptide: Protein TIFY 11b (187 aa).

Residues 68 to 103 (ATAPAAPLTIFYGGRMVVFEDFPADKAAEVMRMASS) form the Tify domain. Residues 121–145 (PIMRKASLQRFFAKRKDRLAATTPY) carry the Jas motif. A Nuclear localization signal motif is present at residues 123–130 (MRKASLQR). A disordered region spans residues 139–168 (LAATTPYARPSPAETKASEPEEKKTPTSWL). Basic and acidic residues predominate over residues 154–163 (KASEPEEKKT).

It belongs to the TIFY/JAZ family. In terms of assembly, interacts with COI1B in a coronatine-dependent manner. Coronatine is an analog of jasmonoyl isoleucine (JA-Ile). In terms of processing, ubiquitinated. Targeted for degradation by the SCF(COI1) E3 ubiquitin ligase-proteasome pathway during jasmonate signaling.

The protein localises to the nucleus. In terms of biological role, repressor of jasmonate responses. The chain is Protein TIFY 11b from Oryza sativa subsp. japonica (Rice).